Reading from the N-terminus, the 250-residue chain is ADPR responsive transcriptional repressor NtrR (250 aa).

The region spanning 26-157 (LMTVDMAIFS…DHHDLLQQAF (132 aa)) is the Nudix hydrolase domain. The Nudix box signature appears at 62–85 (GFVDLEQDQNLMACAHRKLLEKTG). The interval 164 to 237 (TRYTALPISL…RFALQDYDFN (74 aa)) is winged helix-like DNA-binding region.

DNA binding is efficiently suppressed in the presence of ADP-ribose (ADPR) or phospho-ADPR. Accumulation of ADPR resulting from NAD degradation may be interpreted by the cell as a signal to activate recycling of nicotinamide. Functionally, involved in the transcriptional regulation of the nondeamidating salvage pathway for production of NAD from nicotinamide. Represses expression of the prs-nadV-nrtR operon by binding to the DNA region located upstream of the operon, thus blocking the nondeamidating pathway. This Acinetobacter baylyi (strain ATCC 33305 / BD413 / ADP1) protein is ADPR responsive transcriptional repressor NtrR.